A 98-amino-acid polypeptide reads, in one-letter code: Major carboxysome shell protein CsoS1A (98 aa).

One can recognise a BMC domain in the interval 8–93; sequence ALGMIETRGL…VHSEVENILP (86 aa).

This sequence belongs to the bacterial microcompartments protein family. CsoS1 subfamily. Homohexamer with a small central pore; the concave side is mostly positive electrostatic potential, whereas the convex side is mostly negative electrostatic potential. Forms a CsoS2-CsoS1-RuBisCO complex. Interacts with the N-terminus (residues 1-136) of RuBisCO (CbbL).

The protein resides in the carboxysome. Its function is as follows. The major shell protein of the carboxysome, a polyhedral inclusion where RuBisCO (ribulose bisphosphate carboxylase, ccbL-ccbS) is sequestered. Assembles into hexamers which make sheets that form the facets of the polyhedral carboxysome. The shell probably limits the diffusion of CO(2) into and out of the carboxysome. Molecular modeling shows the central pore of this protein is selectively permeable to anions such as HCO(3) rather than CO(2) or O(2). There are estimated to be 2970 CsoS1A/CsoS1C proteins per carboxysome (the proteins differ by only 1 residue). Functionally, unlike beta-carboxysomes, alpha-carboxysomes (Cb) can form without cargo protein. CsoS2 is essential for Cb formation and is also capable of targeting foreign proteins to the Cb. The Cb shell assembles with the aid of CsoS2; CsoS1A, CsoS1B and CsoS1C form the majority of the shell while CsoS4A and CsoS4B form vertices. CsoS1D forms pseudohexamers that probably control metabolite flux into and out of the shell. The polypeptide is Major carboxysome shell protein CsoS1A (Halothiobacillus neapolitanus (strain ATCC 23641 / c2) (Thiobacillus neapolitanus)).